A 125-amino-acid chain; its full sequence is Fluoride-specific ion channel FluC (125 aa).

4 helical membrane passes run 4-24 (LMLV…TVTA), 32-52 (AFPW…GLLV), 67-87 (LLLA…SLDV), and 100-120 (LAYV…GLWL). Na(+)-binding residues include G75 and T78.

This sequence belongs to the fluoride channel Fluc/FEX (TC 1.A.43) family.

The protein localises to the cell inner membrane. The catalysed reaction is fluoride(in) = fluoride(out). With respect to regulation, na(+) is not transported, but it plays an essential structural role and its presence is essential for fluoride channel function. In terms of biological role, fluoride-specific ion channel. Important for reducing fluoride concentration in the cell, thus reducing its toxicity. The polypeptide is Fluoride-specific ion channel FluC (Chelativorans sp. (strain BNC1)).